The chain runs to 178 residues: Hypoxanthine-guanine phosphoribosyltransferase (178 aa).

Residues lysine 46 and glycine 47 each contribute to the diphosphate site. Aspartate 103 is a Mg(2+) binding site. The active-site Proton acceptor is the aspartate 106. Residues lysine 134, 155–156 (FL), and aspartate 162 each bind GMP. Position 168 (arginine 168) interacts with diphosphate.

This sequence belongs to the purine/pyrimidine phosphoribosyltransferase family. Mg(2+) serves as cofactor.

It is found in the cytoplasm. The catalysed reaction is IMP + diphosphate = hypoxanthine + 5-phospho-alpha-D-ribose 1-diphosphate. It catalyses the reaction GMP + diphosphate = guanine + 5-phospho-alpha-D-ribose 1-diphosphate. Its pathway is purine metabolism; IMP biosynthesis via salvage pathway; IMP from hypoxanthine: step 1/1. It functions in the pathway purine metabolism; GMP biosynthesis via salvage pathway; GMP from guanine: step 1/1. Purine salvage pathway enzyme that catalyzes the transfer of the ribosyl-5-phosphate group from 5-phospho-alpha-D-ribose 1-diphosphate (PRPP) to the N9 position of the 6-oxopurines hypoxanthine and guanine to form the corresponding ribonucleotides IMP (inosine 5'-monophosphate) and GMP (guanosine 5'-monophosphate), with the release of PPi. The protein is Hypoxanthine-guanine phosphoribosyltransferase (hpt) of Aquifex aeolicus (strain VF5).